Reading from the N-terminus, the 342-residue chain is Fatty acid desaturase 6 (342 aa).

The next 2 helical transmembrane spans lie at 39–59 (GVDC…FLCL) and 63–83 (SPLV…TLTV). The Histidine box-1 signature appears at 87–91 (HLATH). The Histidine box-2 signature appears at 124–128 (HVKMH). 2 consecutive transmembrane segments (helical) span residues 151 to 171 (YVYM…VAVE) and 185 to 205 (LGLI…VSGF). A Histidine box-3 motif is present at residues 277-281 (HVEHH).

Belongs to the fatty acid desaturase type 1 family.

It localises to the membrane. Its pathway is lipid metabolism; fatty acid metabolism. This is Fatty acid desaturase 6 (FADS6) from Bos taurus (Bovine).